A 184-amino-acid polypeptide reads, in one-letter code: Ribosome-recycling factor (184 aa).

Belongs to the RRF family.

The protein resides in the cytoplasm. Its function is as follows. Responsible for the release of ribosomes from messenger RNA at the termination of protein biosynthesis. May increase the efficiency of translation by recycling ribosomes from one round of translation to another. In Lachnoclostridium phytofermentans (strain ATCC 700394 / DSM 18823 / ISDg) (Clostridium phytofermentans), this protein is Ribosome-recycling factor.